The following is a 207-amino-acid chain: Guanylate kinase (207 aa).

A Guanylate kinase-like domain is found at 7-185 (GIVLVLCAPS…AYDELRAAYI (179 aa)). 14-21 (APSGTGKT) serves as a coordination point for ATP.

The protein belongs to the guanylate kinase family.

It is found in the cytoplasm. It carries out the reaction GMP + ATP = GDP + ADP. Functionally, essential for recycling GMP and indirectly, cGMP. In Nitratidesulfovibrio vulgaris (strain ATCC 29579 / DSM 644 / CCUG 34227 / NCIMB 8303 / VKM B-1760 / Hildenborough) (Desulfovibrio vulgaris), this protein is Guanylate kinase.